Reading from the N-terminus, the 188-residue chain is 3-hydroxyanthranilate 3,4-dioxygenase 2 (188 aa).

An O2-binding site is contributed by Arg-46. Fe cation-binding residues include His-50, Glu-70, and His-108. Position 70 (Glu-70) interacts with substrate. Substrate-binding residues include Arg-112 and Glu-122.

The protein belongs to the 3-HAO family. It depends on Fe(2+) as a cofactor.

It localises to the cytoplasm. The catalysed reaction is 3-hydroxyanthranilate + O2 = (2Z,4Z)-2-amino-3-carboxymuconate 6-semialdehyde. It functions in the pathway cofactor biosynthesis; NAD(+) biosynthesis; quinolinate from L-kynurenine: step 3/3. Functionally, catalyzes the oxidative ring opening of 3-hydroxyanthranilate to 2-amino-3-carboxymuconate semialdehyde, which spontaneously cyclizes to quinolinate. The sequence is that of 3-hydroxyanthranilate 3,4-dioxygenase 2 (bna1-2) from Aspergillus fumigatus (strain CBS 144.89 / FGSC A1163 / CEA10) (Neosartorya fumigata).